A 410-amino-acid chain; its full sequence is Cytochrome P450(BM-1) (410 aa).

Cys-356 serves as a coordination point for heme.

This sequence belongs to the cytochrome P450 family. Heme is required as a cofactor.

It localises to the cytoplasm. Its function is as follows. Cytochromes P450 are a group of heme-thiolate monooxygenases. They oxidize a variety of structurally unrelated compounds, including steroids, fatty acids, and xenobiotics. The sequence is that of Cytochrome P450(BM-1) (cyp106) from Priestia megaterium (strain ATCC 14581 / DSM 32 / CCUG 1817 / JCM 2506 / NBRC 15308 / NCIMB 9376 / NCTC 10342 / NRRL B-14308 / VKM B-512 / Ford 19) (Bacillus megaterium).